Here is a 403-residue protein sequence, read N- to C-terminus: Phosphoglycerate kinase (403 aa).

Residues 21–23, R36, 59–62, R119, and R154 each bind substrate; these read DFN and HLGR. ATP-binding positions include K207, G299, E330, and 357–360; that span reads GGDA.

The protein belongs to the phosphoglycerate kinase family. Monomer.

The protein resides in the cytoplasm. It carries out the reaction (2R)-3-phosphoglycerate + ATP = (2R)-3-phospho-glyceroyl phosphate + ADP. It participates in carbohydrate degradation; glycolysis; pyruvate from D-glyceraldehyde 3-phosphate: step 2/5. The protein is Phosphoglycerate kinase (pgk) of Chlamydia muridarum (strain MoPn / Nigg).